The chain runs to 315 residues: uncharacterized protein (315 aa).

This is an uncharacterized protein from Homo sapiens (Human).